Consider the following 498-residue polypeptide: DNA-directed RNA polymerase subunit Rpo2N (498 aa).

It belongs to the RNA polymerase beta chain family. Part of the RNA polymerase complex.

It is found in the cytoplasm. It carries out the reaction RNA(n) + a ribonucleoside 5'-triphosphate = RNA(n+1) + diphosphate. Functionally, DNA-dependent RNA polymerase (RNAP) catalyzes the transcription of DNA into RNA using the four ribonucleoside triphosphates as substrates. The Rpo2 subunit (Rpo2N and Rpo2C in this organism) is implicated in DNA promoter recognition and in nucleotide binding. In Methanocaldococcus jannaschii (strain ATCC 43067 / DSM 2661 / JAL-1 / JCM 10045 / NBRC 100440) (Methanococcus jannaschii), this protein is DNA-directed RNA polymerase subunit Rpo2N.